Reading from the N-terminus, the 450-residue chain is Molybdate-anion transporter (450 aa).

Helical transmembrane passes span 1–21 (MLVT…GLEL), 43–63 (LDFY…APYL), 79–99 (ILYV…SSLV), 128–148 (FVLL…FSAF), 174–194 (AAFW…AVAS), 195–215 (WIGL…ALAG), 249–269 (VLLL…FVFL), 278–298 (GAPL…GSSL), 311–331 (PMHL…MLTF), 344–364 (FIAF…MSFL), 376–396 (GVLN…LLVL), and 409–429 (FSIC…LFTV).

Belongs to the major facilitator superfamily.

It localises to the cell membrane. Functionally, mediates high-affinity intracellular uptake of the rare oligo-element molybdenum. In Pongo abelii (Sumatran orangutan), this protein is Molybdate-anion transporter (MFSD5).